The primary structure comprises 97 residues: MSIRPLHDRVIVKRKEVETKSAGGIVLTGSAATKSTRGEIIAVGKGRILENGTVQPLDVKVGDIVIFNDGYGVKSEKIDNEEVLIMSESDILAIVEA.

This sequence belongs to the GroES chaperonin family. Heptamer of 7 subunits arranged in a ring. Interacts with the chaperonin GroEL.

Its subcellular location is the cytoplasm. Functionally, together with the chaperonin GroEL, plays an essential role in assisting protein folding. The GroEL-GroES system forms a nano-cage that allows encapsulation of the non-native substrate proteins and provides a physical environment optimized to promote and accelerate protein folding. GroES binds to the apical surface of the GroEL ring, thereby capping the opening of the GroEL channel. This chain is Co-chaperonin GroES, found in Enterobacter sp. (strain 638).